The following is a 349-amino-acid chain: MKGLTLACIAATVVAASHAMTTIIAPIAEISTTSSPSTTTINPLLQSRIDFEISRLTRRLERRIRGLQVGSGRLDRSITSLQRELDFNNAVLAQLPELIKNIMINNPTQRLSSRTVASIMRSVQNAATKASNEESAEVEDRRRRAIFEVTSSIVIVEGTTDSTTTTQIPEVTTQEVDTTTEMVTTAAPEQEVTSTATETTTEMTTQGTTLPSFLVSRINSVVSRIGRFFQRRIQRIQRSLSRLSRFRPLYSRLIDENTSALNNLPLLVRGLVTSPFQRRLRLSQVFRALRFRLTITTPSQPDVSPMSVRKRRQAESAEEDDDLVGDMEDLKELEQEIQEALEEVEKLDV.

The N-terminal stretch at 1 to 19 is a signal peptide; sequence MKGLTLACIAATVVAASHA. Asn-257 carries an N-linked (GlcNAc...) asparagine glycan. The tract at residues 300 to 326 is disordered; sequence QPDVSPMSVRKRRQAESAEEDDDLVGD. Residues 316–326 show a composition bias toward acidic residues; the sequence is SAEEDDDLVGD. A coiled-coil region spans residues 316 to 349; sequence SAEEDDDLVGDMEDLKELEQEIQEALEEVEKLDV.

As to expression, component of the acid-insoluble and acid-soluble organic matrix of calcified layers of the shell (at protein level).

It localises to the secreted. This chain is Threonine-rich protein, found in Lottia gigantea (Giant owl limpet).